Here is a 265-residue protein sequence, read N- to C-terminus: Mlc titration factor A (265 aa).

Residues histidine 111, histidine 148, histidine 152, and glutamate 211 each contribute to the Zn(2+) site.

It belongs to the MtfA family. Interacts with Mlc. Zn(2+) is required as a cofactor.

Its subcellular location is the cytoplasm. Involved in the modulation of the activity of the glucose-phosphotransferase system (glucose-PTS). Interacts with the transcriptional repressor Mlc, preventing its interaction with DNA and leading to the modulation of expression of genes regulated by Mlc, including ptsG, which encodes the PTS system glucose-specific EIICB component. Its function is as follows. Shows zinc-dependent metallopeptidase activity. The sequence is that of Mlc titration factor A from Escherichia coli (strain UTI89 / UPEC).